The chain runs to 1070 residues: MPKRDDIKTILVIGSGPIVIGQAAEFDYAGTQACLSLKEEGYRVVLVNSNPATIMTDAEMADKVYIEPITLDFVSRIIRKERPDAILPTLGGQTGLNMAMELSAAGILDECNVEVLGTDLTAIKKAEDREAFRDLMNELGEPVPESDIIHNLDEAYSFVERIGYPVIVRPAYTLGGSGGGICHNEQELIETVTSGLKLSPVTQCLLEKSIAGFKEVEYEVMRDANNNAMVVCNMENIDPVGIHTGDSIVVAPSQTLSDREYQLLRDVSLKIIRALEIEGGCNVQLALDPDSYNYYVIEVNPRVSRSSALASKATGYPIAKLAAKIAVGLTLDEVRNPVTGTTFAHFEPTLDYVVAKIPRFAFDKFEQADRRLGTQMKATGEVMAIGRSWEEALLKAVRSLEVGADHLLLEEAENADEETLERKICFPEDDRLFFLAAALRRGQTIEQLHEKTKIDLFFLYKLSKSIELENRVKENPQNEAILAEAKRAGFSDAFLATCWNIDEQAIYDLRKAQNLFPVYKMVDTCAAEFESTTPYFYSTYEEENESTRSAKESVIVLGSGPIRIGQGVEFDYATVHSVWAIQQAGYEAIIINNNPETVSTDFSISDKLYFEPLTLEDVMHVIEIEQPLGVVVQFGGQTAINLADGLAKRGVKILGTSLEDTDRAENRDAFEKALEILQIPQPAGKTATSVEEAIKVATDIGYPVLVRPSYVLGGRAMEIVESEEALKHYMTNAVKVNPKHPVLVDRYVSGQEVEVDAISDGENVLIPGIMEHIERAGVHSGDSIAVYPAQRLSQQVKNTIVDYTTRLATGLNIIGMLNIQYVVDGEEVFVIEVNPRSSRTAPFLSKITEIPMANVATRVILGENLIDLGYTPGLAPEKQEIFVKVPVFSFAKLRSVDTSLGPEMKSTGEVMGKDVTLEKALYKGFVASGTTMHDYGTVLLTVADRDKKEAVELAKRFNRIGFTIMATKGTASTLEEAEIPVSQVKKIGENQETLIDYIRNGQVTLVVNTLTTGKRPERDGFQIRRESVENGIPVCTSLDTAEAILRVLESRSFELESMNASEVKQPKVRV.

The segment at 1–401 (MPKRDDIKTI…ALLKAVRSLE (401 aa)) is carboxyphosphate synthetic domain. Positions 129, 169, 175, 176, 208, 210, 215, 241, 242, 243, 284, and 298 each coordinate ATP. An ATP-grasp 1 domain is found at 133–327 (RDLMNELGEP…IAKLAAKIAV (195 aa)). Mg(2+) contacts are provided by Gln284, Glu298, and Asn300. Mn(2+) is bound by residues Gln284, Glu298, and Asn300. An oligomerization domain region spans residues 402 to 546 (VGADHLLLEE…YSTYEEENES (145 aa)). The interval 547–929 (TRSAKESVIV…ALYKGFVASG (383 aa)) is carbamoyl phosphate synthetic domain. The 191-residue stretch at 671 to 861 (EKALEILQIP…MANVATRVIL (191 aa)) folds into the ATP-grasp 2 domain. Residues Arg707, Arg746, Val748, Glu752, Gly777, Val778, His779, Ser780, Gln820, and Glu832 each contribute to the ATP site. Residues Gln820, Glu832, and Asn834 each contribute to the Mg(2+) site. Residues Gln820, Glu832, and Asn834 each contribute to the Mn(2+) site. Positions 930-1070 (TTMHDYGTVL…SEVKQPKVRV (141 aa)) constitute an MGS-like domain. Residues 930–1070 (TTMHDYGTVL…SEVKQPKVRV (141 aa)) form an allosteric domain region.

This sequence belongs to the CarB family. Composed of two chains; the small (or glutamine) chain promotes the hydrolysis of glutamine to ammonia, which is used by the large (or ammonia) chain to synthesize carbamoyl phosphate. Tetramer of heterodimers (alpha,beta)4. It depends on Mg(2+) as a cofactor. Requires Mn(2+) as cofactor.

The catalysed reaction is hydrogencarbonate + L-glutamine + 2 ATP + H2O = carbamoyl phosphate + L-glutamate + 2 ADP + phosphate + 2 H(+). It catalyses the reaction hydrogencarbonate + NH4(+) + 2 ATP = carbamoyl phosphate + 2 ADP + phosphate + 2 H(+). It participates in amino-acid biosynthesis; L-arginine biosynthesis; carbamoyl phosphate from bicarbonate: step 1/1. Its pathway is pyrimidine metabolism; UMP biosynthesis via de novo pathway; (S)-dihydroorotate from bicarbonate: step 1/3. Its function is as follows. Large subunit of the glutamine-dependent carbamoyl phosphate synthetase (CPSase). CPSase catalyzes the formation of carbamoyl phosphate from the ammonia moiety of glutamine, carbonate, and phosphate donated by ATP, constituting the first step of 2 biosynthetic pathways, one leading to arginine and/or urea and the other to pyrimidine nucleotides. The large subunit (synthetase) binds the substrates ammonia (free or transferred from glutamine from the small subunit), hydrogencarbonate and ATP and carries out an ATP-coupled ligase reaction, activating hydrogencarbonate by forming carboxy phosphate which reacts with ammonia to form carbamoyl phosphate. In Listeria welshimeri serovar 6b (strain ATCC 35897 / DSM 20650 / CCUG 15529 / CIP 8149 / NCTC 11857 / SLCC 5334 / V8), this protein is Carbamoyl phosphate synthase large chain.